Here is a 533-residue protein sequence, read N- to C-terminus: MAIPQSCTVLVAGGGPGGSYTAAALAREGVDVVLLEADCHPRYHIGESLLPSMRYLLRFIDLEDTFEQHGFQKKLGAFFKLNAKSAGYTDFIRANGPNGYSWNVVRSESDEILFRHATKSGAKTFENVSLKSVNFEPYENDKFTSQDKLTNPGRPVSAEWKTKDGCSGTISFDYLVDATGRVGILSTKYLKNRKFNESFRNIAMWGYFKGNIPPSPGTDRENQPISEGMRDGSGWVWMLPLHNGTVSIGAVVRKDIFQAKKKALPEGTTEAQTLASLVALCPTISSYLEPAELASGIRQAADYSYSANAYAGPNFRIVGDAGCFIDPFFSSGHHLALSSALAAATSINACIRGDCNEFDASRWFAKKVDEGYTLFLVVVMAALKQIRMQEQPILSDLDEEGFDRAFTILRPVIQGAADKETAPKAKGESITETIDLCLTALNDLHDTELQRKLTSIVEAKGTPEQEQLLGKLSPDETAALHRMRAMHSILPMGELEDFENSNIDGFKARLEKGSLGLRRERALCRDHAGDLQM.

Positions 14, 17, and 47 each coordinate FAD. Residues Ser-331 and Gly-332 each contribute to the chloride site.

Belongs to the flavin-dependent halogenase family.

It catalyses the reaction griseophenone C + FADH2 + chloride + O2 = griseophenone B + FAD + 2 H2O + H(+). The protein operates within secondary metabolite biosynthesis; terpenoid biosynthesis. Its function is as follows. Flavin-dependent halogenase; part of the gene cluster that mediates the biosynthesis of griseofulvin, an important antifungal drug that has been in use for a long time for treating dermatophyte infections. The first step of the pathway is the formation of the heptaketide backbone by gsfA which is initiated by priming with acetyl-CoA, followed by sequential condensations of 6 malonyl-CoA units. The resulting benzophenone can undergo a spontaneous dehydration to form norlichexanthone. However, the true precursor for the griseofulvin biosynthesis is not norlichexanthone, but the heptaketide benzophenone that is O-methylated at 3-OH by gsfB to produce griseophenone D which is further methylated at 9-OH by gsfC to yield griseophenone C. Griseophenone C is then substrate of halogenase gsfI which is responsible for the regio-specific chlorination at the C13 position to form griseophenone B. The cytochrome P450 gsfF catalyzes the coupling of orcinol and phloroglucinol rings in griseophenone B to form desmethyl-dehydrogriseofulvin A which is further methylated at 5-OH by gsfD to yield dehydrogriseofulvin. Finally, gsfE performs stereospecific reduction of enone 18 of dehydrogriseofulvin to afford the final product griseofulvin. This is Flavin-dependent halogenase gsfI from Penicillium aethiopicum.